We begin with the raw amino-acid sequence, 434 residues long: Adenylosuccinate synthetase (434 aa).

GTP is bound by residues 25–31 and 53–55; these read GDEGKGK and GHT. Residue Asp26 is the Proton acceptor of the active site. The Mg(2+) site is built by Asp26 and Gly53. IMP is bound by residues 26–29, 51–54, Thr142, Arg156, Asn233, Thr248, and Arg312; these read DEGK and NAGH. His54 acts as the Proton donor in catalysis. Position 308-314 (308-314) interacts with substrate; it reads VTTGRKR. GTP contacts are provided by residues Arg314, 340-342, and 422-424; these read KLD and GVG.

It belongs to the adenylosuccinate synthetase family. Homodimer. Requires Mg(2+) as cofactor.

It is found in the cytoplasm. The catalysed reaction is IMP + L-aspartate + GTP = N(6)-(1,2-dicarboxyethyl)-AMP + GDP + phosphate + 2 H(+). It participates in purine metabolism; AMP biosynthesis via de novo pathway; AMP from IMP: step 1/2. With respect to regulation, competitively Inhibited by GMP. Allosterically inhibited by AMP. Its function is as follows. Plays an important role in the de novo pathway and in the salvage pathway of purine nucleotide biosynthesis. Catalyzes the first committed step in the biosynthesis of AMP from IMP. The sequence is that of Adenylosuccinate synthetase (ade2) from Schizosaccharomyces pombe (strain 972 / ATCC 24843) (Fission yeast).